Reading from the N-terminus, the 365-residue chain is Heterogeneous nuclear ribonucleoproteins A1 homolog (365 aa).

The segment at 4-94 (SEAPNEPEQL…EPKRAVSRED (91 aa)) is globular A domain. RRM domains follow at residues 14-97 (RKLF…DSSR) and 105-184 (KKIF…LSKQ). A globular B domain region spans residues 95–185 (SSRPGAHLTV…QVRKALSKQE (91 aa)). Disordered stretches follow at residues 175–208 (SQVR…RGGF) and 328–365 (GPMK…GRRF). 2 stretches are compositionally biased toward gly residues: residues 198–208 (GSGNYGSRGGF) and 330–365 (MKGG…GRRF). Positions 321-359 (SQSSSNFGPMKGGNYGGGRNSGPYGGGYGGGSASSSSGY) are nuclear targeting sequence.

It localises to the nucleus. It is found in the cytoplasm. In terms of biological role, this protein is a component of ribonucleosomes. The chain is Heterogeneous nuclear ribonucleoproteins A1 homolog (hnrnpa1) from Xenopus laevis (African clawed frog).